The following is a 1428-amino-acid chain: uncharacterized protein (1428 aa).

Disordered regions lie at residues 1–53 (MAKK…AFKV), 249–274 (DIKHTPNKETQPSNQVDDSLKSKDSK), and 377–413 (KNGIQEDSQSTDDSSKDDDNNSESNDMSPHNDAETRA). Polar residues predominate over residues 16–33 (ATTSIPSRSASSPANKNQ). Positions 34–51 (VKGEKNNKTQKVEPKNAF) are enriched in basic and acidic residues. Residues 256–265 (KETQPSNQVD) are compositionally biased toward polar residues. One can recognise a Helicase ATP-binding domain in the interval 641-811 (IDAVNNSQLL…FEGSNLITIP (171 aa)). Residue 654–661 (GDTGCGKS) coordinates ATP. The DEAH box signature appears at 758-761 (DEVH). In terms of domain architecture, Helicase C-terminal spans 886–1064 (LIVYLLKYIF…EVVLRVKMCQ (179 aa)).

It belongs to the helicase family. SKI2 subfamily.

It localises to the cytoplasm. This is an uncharacterized protein from Schizosaccharomyces pombe (strain 972 / ATCC 24843) (Fission yeast).